We begin with the raw amino-acid sequence, 471 residues long: 3-isopropylmalate dehydratase large subunit (471 aa).

3 residues coordinate [4Fe-4S] cluster: cysteine 347, cysteine 409, and cysteine 412.

The protein belongs to the aconitase/IPM isomerase family. LeuC type 1 subfamily. In terms of assembly, heterodimer of LeuC and LeuD. The cofactor is [4Fe-4S] cluster.

It catalyses the reaction (2R,3S)-3-isopropylmalate = (2S)-2-isopropylmalate. Its pathway is amino-acid biosynthesis; L-leucine biosynthesis; L-leucine from 3-methyl-2-oxobutanoate: step 2/4. Functionally, catalyzes the isomerization between 2-isopropylmalate and 3-isopropylmalate, via the formation of 2-isopropylmaleate. The polypeptide is 3-isopropylmalate dehydratase large subunit (Buchnera aphidicola subsp. Rhopalosiphum padi).